The sequence spans 401 residues: Nuclear hormone receptor family member nhr-65 (401 aa).

A DNA-binding region (nuclear receptor) is located at residues 10–79 (PERCKVCGDT…AGMSSENFQF (70 aa)). 2 consecutive NR C4-type zinc fingers follow at residues 13 to 33 (CKVC…CRAC) and 49 to 67 (CENH…LQRC). Residues 132–398 (KAEKLIEFGS…FSHPEFIQDA (267 aa)) enclose the NR LBD domain.

This sequence belongs to the nuclear hormone receptor family.

The protein localises to the nucleus. Its function is as follows. Orphan nuclear receptor. The chain is Nuclear hormone receptor family member nhr-65 (nhr-65) from Caenorhabditis elegans.